The following is a 264-amino-acid chain: Ribosomal RNA small subunit methyltransferase A (264 aa).

S-adenosyl-L-methionine-binding residues include Asn-12, Leu-14, Gly-39, Glu-60, Asp-83, and Asn-103.

This sequence belongs to the class I-like SAM-binding methyltransferase superfamily. rRNA adenine N(6)-methyltransferase family. RsmA subfamily.

The protein resides in the cytoplasm. It catalyses the reaction adenosine(1518)/adenosine(1519) in 16S rRNA + 4 S-adenosyl-L-methionine = N(6)-dimethyladenosine(1518)/N(6)-dimethyladenosine(1519) in 16S rRNA + 4 S-adenosyl-L-homocysteine + 4 H(+). In terms of biological role, specifically dimethylates two adjacent adenosines (A1518 and A1519) in the loop of a conserved hairpin near the 3'-end of 16S rRNA in the 30S particle. May play a critical role in biogenesis of 30S subunits. This Syntrophotalea carbinolica (strain DSM 2380 / NBRC 103641 / GraBd1) (Pelobacter carbinolicus) protein is Ribosomal RNA small subunit methyltransferase A.